Here is a 392-residue protein sequence, read N- to C-terminus: Probable protein phosphatase 2C 78 (392 aa).

A PPM-type phosphatase domain is found at 39-342; sequence ASGEYSIAVA…DDITVVVVYL (304 aa). Mn(2+)-binding residues include D73, G74, D274, and D333.

This sequence belongs to the PP2C family. Mg(2+) is required as a cofactor. Requires Mn(2+) as cofactor.

It catalyses the reaction O-phospho-L-seryl-[protein] + H2O = L-seryl-[protein] + phosphate. The catalysed reaction is O-phospho-L-threonyl-[protein] + H2O = L-threonyl-[protein] + phosphate. This Oryza sativa subsp. japonica (Rice) protein is Probable protein phosphatase 2C 78.